Consider the following 20-residue polypeptide: Putative 60 kDa spermidine-binding protein (20 aa).

The tract at residues 1–20 (SXAAVVEPPETSQNRIAKGE) is disordered. Positions 10-20 (ETSQNRIAKGE) are enriched in polar residues.

As to quaternary structure, dimer of 18 kDa and 60 kDa subunit.

The protein localises to the microsome membrane. It is found in the endoplasmic reticulum membrane. Functionally, may have spermidine-binding activity. This Zea mays (Maize) protein is Putative 60 kDa spermidine-binding protein.